A 66-amino-acid polypeptide reads, in one-letter code: ATP synthase subunit c (66 aa).

The next 2 helical transmembrane spans lie at 3 to 23 (LTFLGLCIACMGVSVGEGLLM) and 45 to 65 (FLGVAFIEGTFFVTLVFSFII).

The protein belongs to the ATPase C chain family. F-type ATPases have 2 components, F(1) - the catalytic core - and F(0) - the membrane proton channel. F(1) has five subunits: alpha(3), beta(3), gamma(1), delta(1), epsilon(1). F(0) has three main subunits: a(1), b(2) and c(10-14). The alpha and beta chains form an alternating ring which encloses part of the gamma chain. F(1) is attached to F(0) by a central stalk formed by the gamma and epsilon chains, while a peripheral stalk is formed by the delta and b chains.

The protein resides in the cell membrane. In terms of biological role, f(1)F(0) ATP synthase produces ATP from ADP in the presence of a proton or sodium gradient. F-type ATPases consist of two structural domains, F(1) containing the extramembraneous catalytic core and F(0) containing the membrane proton channel, linked together by a central stalk and a peripheral stalk. During catalysis, ATP synthesis in the catalytic domain of F(1) is coupled via a rotary mechanism of the central stalk subunits to proton translocation. Functionally, key component of the F(0) channel; it plays a direct role in translocation across the membrane. A homomeric c-ring of between 10-14 subunits forms the central stalk rotor element with the F(1) delta and epsilon subunits. The sequence is that of ATP synthase subunit c from Streptococcus pneumoniae serotype 19F (strain G54).